The primary structure comprises 158 residues: Small ribosomal subunit protein bS16 (158 aa).

A compositionally biased stretch (low complexity) spans 111–121 (AAAGLAEAPTK). Residues 111 to 158 (AAAGLAEAPTKPAKKAPKAEAAPKTEAAPKADAPKTEEQAGAGSGEQG) form a disordered region. Basic and acidic residues predominate over residues 127–148 (PKAEAAPKTEAAPKADAPKTEE).

It belongs to the bacterial ribosomal protein bS16 family.

This is Small ribosomal subunit protein bS16 from Salinispora arenicola (strain CNS-205).